A 241-amino-acid chain; its full sequence is Aspartate/glutamate leucyltransferase (241 aa).

The protein belongs to the R-transferase family. Bpt subfamily.

Its subcellular location is the cytoplasm. The enzyme catalyses N-terminal L-glutamyl-[protein] + L-leucyl-tRNA(Leu) = N-terminal L-leucyl-L-glutamyl-[protein] + tRNA(Leu) + H(+). It catalyses the reaction N-terminal L-aspartyl-[protein] + L-leucyl-tRNA(Leu) = N-terminal L-leucyl-L-aspartyl-[protein] + tRNA(Leu) + H(+). Functionally, functions in the N-end rule pathway of protein degradation where it conjugates Leu from its aminoacyl-tRNA to the N-termini of proteins containing an N-terminal aspartate or glutamate. This is Aspartate/glutamate leucyltransferase from Parvibaculum lavamentivorans (strain DS-1 / DSM 13023 / NCIMB 13966).